We begin with the raw amino-acid sequence, 421 residues long: NADP(+)-dependent glutamate dehydrogenase (421 aa).

Substrate contacts are provided by K70 and K94. K106 acts as the Proton donor in catalysis. 2 residues coordinate NADP(+): T190 and N221. A substrate-binding site is contributed by S354.

It belongs to the Glu/Leu/Phe/Val dehydrogenases family. Homohexamer.

The enzyme catalyses L-glutamate + NADP(+) + H2O = 2-oxoglutarate + NH4(+) + NADPH + H(+). Its activity is regulated as follows. Is not regulated allosterically. Activity is inhibited in the presence of high ionic strength; the inhibitory effect of KCl is slightly higher than that of NaCl. Catalyzes the reversible oxidative deamination of L-glutamate to 2-oxoglutarate and ammonia, thereby playing a key role at the intersection of the carbon and nitrogen metabolic pathways. Shows a high preference for NADP(+)/NADPH as the acceptor/donor over NAD(+)/NADH. May function in vivo in the synthetic direction. Also catalyzes at very low rates the oxidative deamination of L-2-aminobutyrate, and the reductive amination of 2-oxovalerate and 2-oxobutyrate. In Pyrobaculum calidifontis (strain DSM 21063 / JCM 11548 / VA1), this protein is NADP(+)-dependent glutamate dehydrogenase.